Here is a 46-residue protein sequence, read N- to C-terminus: Large ribosomal subunit protein bL36 (46 aa).

This sequence belongs to the bacterial ribosomal protein bL36 family.

This is Large ribosomal subunit protein bL36 from Serratia proteamaculans (strain 568).